The following is a 669-amino-acid chain: MSIKFRTVITTAGAAKLAAATAPGRRKVGITTMAVGDGGGKLPVPDAGQTGLIHEVWRHALNKISQDKRNSNYIIAELVIPPEVGGFWMRELGLYDDAGTLIAVANMAESYKPALAEGSGRWQTCRMVIIVSSVASVELTIDTTTVMATQDYVDDKIAEHEQSRRHPDASLTAKGFTQLSSATNSTSETLAATPKAVKAAYDLANGKYTAQDATTARKGLVQLSSATNSTSETLAATPKAVKTVMDETNKKAPLNSPALTGTPTTPTARQGTNNTQIANTAFVMAAIAALVDSSPDALNTLNELAAALGNDPNFATTMTNALAGKQPKDATLTALAGLATAADRFPYFTGNDVASLATLTKVGRDILAKSTVAAVIEYLGLQETVNRAGNAVQKNGDTLSGGLTFENDSILAWIRNTDWAKIGFKNDADGDTDSYMWFETGDNGNEYFKWRSRQSTTTKDLMTLKWDALNILVNAVINGCFGVGTTNALGGSSIVLGDNDTGFKQNGDGILDVYANSQRVFRFQNGVAIAFKNIQAGDSKKFSLSSSNTSTKNITFNLWGASTRPVVAELGDEAGWHFYSQRNTDNSVIFAVNGQMQPSNWGNFDSRYVKDVRLGTRVVQLMARGGRYEKAGHTITGLRIIGEVDGDDEAIFRPIQKYINGTWYNVAQV.

The disordered stretch occupies residues 251–272 (KAPLNSPALTGTPTTPTARQGT).

The protein belongs to the tail fiber family.

The protein resides in the virion. The sequence is that of Probable tail fiber protein (H) from Escherichia phage P2 (Bacteriophage P2).